A 533-amino-acid chain; its full sequence is Tyrosine protein-kinase src-1 (533 aa).

Gly2 carries N-myristoyl glycine lipidation. Residues Gln71–Thr132 form the SH3 domain. One can recognise an SH2 domain in the interval Trp138–Ala237. In terms of domain architecture, Protein kinase spans Leu262–Phe521. ATP is bound by residues Leu268 to Val276 and Lys290. Asp381 acts as the Proton acceptor in catalysis. A Phosphotyrosine; by autocatalysis modification is found at Tyr416. Tyr528 is subject to Phosphotyrosine.

Belongs to the protein kinase superfamily. Tyr protein kinase family. SRC subfamily. Interacts (via SH2 domain and SH3 domain) with unc-5 (via cytoplasmic domain); the interaction requires kinase activity. Interacts (when activated and phosphorylated at 'Tyr-416') with ina-1 (via cytoplasmic domain) and with ced-2 (via SH2 domain). The cofactor is Mg(2+). Mn(2+) serves as cofactor. In terms of processing, may be phosphorylated on Tyr-528 by csk-1. In terms of tissue distribution, expressed in some neurons (ASE, ADF, AVA, AUA, RMDV and BAG) in the head region, anchor cell, vulva, cells around anus, body wall muscle, pharyngeal muscles in procorpus and metacorpus. Expressed in gonadal distal tip cells.

It is found in the cell membrane. It localises to the cell projection. The protein resides in the phagocytic cup. It carries out the reaction L-tyrosyl-[protein] + ATP = O-phospho-L-tyrosyl-[protein] + ADP + H(+). May be activated by autophosphorylation. May be inhibited by csk-1-mediated phosphorylation. Its function is as follows. Non-receptor tyrosine-protein kinase which plays a role in endoderm development by controlling spindle orientation in EMS blastomere, probably downstream of receptor mes-1. Also involved in embryonic body morphogenesis, especially in the formation of the pharynx and the intestine. May be dispensable for pharyngeal muscle organization in the adult. Probably phosphorylates netrin receptor unc-5, to regulate distal tip cell (DTC) migration during gonad development and in axon repulsion. Plays a role in the migration of the QR neuroblast, a precursor of the AVM neuron, and in the migration of the axon cone of AVM, ALM, CAN and PVM neurons. May act downstream of migratory protein mig-13 to control AVM neuron migration. Probably downstream of integrin ina-1/pat-3, plays a role in the clearance of apoptotic cells during mid-embryogenesis. Phosphorylates ced-1 at 'Tyr-1019' which promotes ced-1 proteasomal degradation, maintaining appropriate ced-1 levels for apoptotic cell clearance. This is Tyrosine protein-kinase src-1 from Caenorhabditis elegans.